The primary structure comprises 854 residues: Leucine--tRNA ligase (854 aa).

The disordered stretch occupies residues 1 to 32 (MARRDMAAETMDPRASTEPSPNEPREPARYDH). Positions 23–32 (EPREPARYDH) are enriched in basic and acidic residues. The 'HIGH' region motif lies at 69–80 (PYPSGSGLHVGH). The short motif at 633–637 (KMSKS) is the 'KMSKS' region element. ATP is bound at residue Lys-636.

This sequence belongs to the class-I aminoacyl-tRNA synthetase family.

The protein resides in the cytoplasm. It catalyses the reaction tRNA(Leu) + L-leucine + ATP = L-leucyl-tRNA(Leu) + AMP + diphosphate. This is Leucine--tRNA ligase from Sorangium cellulosum (strain So ce56) (Polyangium cellulosum (strain So ce56)).